The chain runs to 263 residues: Thymidylate kinase (263 aa).

Residues 1–51 constitute a mitochondrion transit peptide; the sequence is MKRICSVSSVQLFSRSFRALASPRSLNYPLQCIKRSSVRMESSNFSSGVRT. An ATP-binding site is contributed by 66–74; the sequence is GLDRSGKST.

This sequence belongs to the thymidylate kinase family. As to expression, expressed in root, rosette leaves, flower buds, flowers and siliques.

The protein resides in the mitochondrion. The protein localises to the cytoplasm. Its subcellular location is the nucleus. It localises to the nucleoplasm. The catalysed reaction is dTMP + ATP = dTDP + ADP. The protein operates within pyrimidine metabolism; dTTP biosynthesis. Functionally, catalyzes the conversion of dTMP to dTDP. Involved in the regulation of DNA replication. Is essential to promote the first division of the zygote. In Arabidopsis thaliana (Mouse-ear cress), this protein is Thymidylate kinase.